The following is a 285-amino-acid chain: Protease HtpX homolog (285 aa).

Transmembrane regions (helical) follow at residues 7-27 and 30-50; these read TAML…MIGG and GMTI…WFSD. H131 lines the Zn(2+) pocket. Residue E132 is part of the active site. H135 lines the Zn(2+) pocket. 2 helical membrane-spanning segments follow: residues 146 to 166 and 177 to 197; these read ITAT…FFGG and IAGI…QMAI. E202 contacts Zn(2+).

This sequence belongs to the peptidase M48B family. Zn(2+) is required as a cofactor.

It localises to the cell inner membrane. The protein is Protease HtpX homolog of Burkholderia cenocepacia (strain HI2424).